The chain runs to 434 residues: Phosphomethylpyrimidine synthase 2 (434 aa).

Substrate is bound by residues Met-94, Tyr-123, His-162, 184–186, 225–228, and Glu-264; these read SRG and NAMR. Residue His-268 participates in Zn(2+) binding. Residue Tyr-291 coordinates substrate. Position 332 (His-332) interacts with Zn(2+). Residues Cys-408, Cys-411, and Cys-415 each coordinate [4Fe-4S] cluster.

It belongs to the ThiC family. Requires [4Fe-4S] cluster as cofactor.

The enzyme catalyses 5-amino-1-(5-phospho-beta-D-ribosyl)imidazole + S-adenosyl-L-methionine = 4-amino-2-methyl-5-(phosphooxymethyl)pyrimidine + CO + 5'-deoxyadenosine + formate + L-methionine + 3 H(+). It functions in the pathway cofactor biosynthesis; thiamine diphosphate biosynthesis. Its function is as follows. Catalyzes the synthesis of the hydroxymethylpyrimidine phosphate (HMP-P) moiety of thiamine from aminoimidazole ribotide (AIR) in a radical S-adenosyl-L-methionine (SAM)-dependent reaction. In Methanosphaera stadtmanae (strain ATCC 43021 / DSM 3091 / JCM 11832 / MCB-3), this protein is Phosphomethylpyrimidine synthase 2.